The chain runs to 485 residues: Polyol:NADP oxidoreductase (485 aa).

Belongs to the mannitol dehydrogenase family.

Its subcellular location is the cytoplasm. This chain is Polyol:NADP oxidoreductase (por), found in Gluconobacter oxydans (strain 621H) (Gluconobacter suboxydans).